Consider the following 349-residue polypeptide: N-acetyltaurine hydrolase (349 aa).

A divalent metal cation-binding residues include His-26, His-28, Glu-169, His-201, His-230, and Asp-298.

The protein belongs to the metallo-dependent hydrolases superfamily. Phosphotriesterase family. Requires a divalent metal cation as cofactor.

It localises to the cytoplasm. Its subcellular location is the cytosol. It catalyses the reaction N-acetyltaurine + H2O = taurine + acetate. It carries out the reaction N-propanoyltaurine + H2O = propanoate + taurine. The catalysed reaction is N-acetyl-L-methionine + H2O = L-methionine + acetate. The enzyme catalyses N-acetyl-L-isoleucine + H2O = L-isoleucine + acetate. It catalyses the reaction N-acetyl-L-leucine + H2O = L-leucine + acetate. It carries out the reaction N-acetyl-L-valine + H2O = L-valine + acetate. N-acetyltaurine hydrolase that regulates feeding by catalyzing the hydrolysis of N-acetyltaurine into taurine and acetate. N-acetyltaurine has anorexigenic and anti-obesity effects that are dependent on GFRAL receptor and GDF15. PTER also acts on other N-acetyl amino acids (Met, Ile, Leu, Val) and N-propionyltaurine, but at lower rates. The protein is N-acetyltaurine hydrolase of Pongo abelii (Sumatran orangutan).